A 138-amino-acid chain; its full sequence is Cysteine desulfuration protein SufE (138 aa).

C51 serves as the catalytic Cysteine persulfide intermediate.

The protein belongs to the SufE family. As to quaternary structure, homodimer. Interacts with SufS.

It localises to the cytoplasm. It participates in cofactor biosynthesis; iron-sulfur cluster biosynthesis. Participates in cysteine desulfuration mediated by SufS. Cysteine desulfuration mobilizes sulfur from L-cysteine to yield L-alanine and constitutes an essential step in sulfur metabolism for biosynthesis of a variety of sulfur-containing biomolecules. Functions as a sulfur acceptor for SufS, by mediating the direct transfer of the sulfur atom from the S-sulfanylcysteine of SufS, an intermediate product of cysteine desulfuration process. The sequence is that of Cysteine desulfuration protein SufE from Escherichia coli (strain K12 / MC4100 / BW2952).